The sequence spans 273 residues: 4-hydroxy-tetrahydrodipicolinate reductase (273 aa).

NAD(+) contacts are provided by residues 11–16, 102–104, and 126–129; these read GALGRM, GTT, and SPNF. His159 serves as the catalytic Proton donor/acceptor. His160 provides a ligand contact to (S)-2,3,4,5-tetrahydrodipicolinate. Lys163 acts as the Proton donor in catalysis. 169–170 contributes to the (S)-2,3,4,5-tetrahydrodipicolinate binding site; the sequence is GT.

Belongs to the DapB family. In terms of assembly, homotetramer.

The protein resides in the cytoplasm. It catalyses the reaction (S)-2,3,4,5-tetrahydrodipicolinate + NAD(+) + H2O = (2S,4S)-4-hydroxy-2,3,4,5-tetrahydrodipicolinate + NADH + H(+). It carries out the reaction (S)-2,3,4,5-tetrahydrodipicolinate + NADP(+) + H2O = (2S,4S)-4-hydroxy-2,3,4,5-tetrahydrodipicolinate + NADPH + H(+). It functions in the pathway amino-acid biosynthesis; L-lysine biosynthesis via DAP pathway; (S)-tetrahydrodipicolinate from L-aspartate: step 4/4. Its function is as follows. Catalyzes the conversion of 4-hydroxy-tetrahydrodipicolinate (HTPA) to tetrahydrodipicolinate. This is 4-hydroxy-tetrahydrodipicolinate reductase from Buchnera aphidicola subsp. Cinara cedri (strain Cc).